The chain runs to 348 residues: Maintenance of mitochondrial morphology protein 1 (348 aa).

Over 1-35 the chain is Lumenal; sequence MAGKADLGHTGISDNIVERQIFVPQPNNAWSFTQG. A helical transmembrane segment spans residues 36 to 56; that stretch reads LMCGQASVVVVLLVFIKFFVF. At 57–348 the chain is on the cytoplasmic side; sequence SEAPPSSGAA…GKTEKVNGNE (292 aa). One can recognise an SMP-LTD domain in the interval 114–323; the sequence is NPESLDWFNV…EPKFQVVRLP (210 aa). A disordered region spans residues 328–348; the sequence is RSKNTREPVGAGKTEKVNGNE.

Belongs to the MMM1 family. As to quaternary structure, homodimer. Component of the ER-mitochondria encounter structure (ERMES) or MDM complex, composed of MMM1, MDM10, MDM12 and MDM34. An MMM1 homodimer associates with one molecule of MDM12 on each side in a pairwise head-to-tail manner, and the SMP-LTD domains of MMM1 and MDM12 generate a continuous hydrophobic tunnel for phospholipid trafficking.

It is found in the endoplasmic reticulum membrane. In terms of biological role, component of the ERMES/MDM complex, which serves as a molecular tether to connect the endoplasmic reticulum (ER) and mitochondria. Components of this complex are involved in the control of mitochondrial shape and protein biogenesis, and function in nonvesicular lipid trafficking between the ER and mitochondria. The MDM12-MMM1 subcomplex functions in the major beta-barrel assembly pathway that is responsible for biogenesis of all outer membrane beta-barrel proteins, and acts in a late step after the SAM complex. The MDM10-MDM12-MMM1 subcomplex further acts in the TOM40-specific pathway after the action of the MDM12-MMM1 complex. Essential for establishing and maintaining the structure of mitochondria and maintenance of mtDNA nucleoids. This chain is Maintenance of mitochondrial morphology protein 1, found in Clavispora lusitaniae (strain ATCC 42720) (Yeast).